The following is a 161-amino-acid chain: Probable chemoreceptor glutamine deamidase CheD (161 aa).

This sequence belongs to the CheD family.

The catalysed reaction is L-glutaminyl-[protein] + H2O = L-glutamyl-[protein] + NH4(+). Probably deamidates glutamine residues to glutamate on methyl-accepting chemotaxis receptors (MCPs), playing an important role in chemotaxis. In Lachnoclostridium phytofermentans (strain ATCC 700394 / DSM 18823 / ISDg) (Clostridium phytofermentans), this protein is Probable chemoreceptor glutamine deamidase CheD.